Reading from the N-terminus, the 114-residue chain is Iron-sulfur cluster insertion protein ErpA (114 aa).

Positions 42, 106, and 108 each coordinate iron-sulfur cluster.

Belongs to the HesB/IscA family. Homodimer. It depends on iron-sulfur cluster as a cofactor.

Functionally, required for insertion of 4Fe-4S clusters for at least IspG. The chain is Iron-sulfur cluster insertion protein ErpA from Hamiltonella defensa subsp. Acyrthosiphon pisum (strain 5AT).